A 409-amino-acid chain; its full sequence is Lissencephaly-1 homolog (409 aa).

The 33-residue stretch at 7–39 folds into the LisH domain; that stretch reads QKEELNKAIADYLHQCGFEDTLNAFKQDANMPG. The stretch at 54 to 80 forms a coiled coil; sequence TSVIRLQKKVMDLETRLSEAEKEVHHG. The segment at 72–95 is disordered; that stretch reads EAEKEVHHGGGPKKTRSPEDWIPR. 7 WD repeats span residues 104 to 145, 146 to 187, 188 to 229, 231 to 269, 272 to 332, 335 to 374, and 377 to 409; these read GHRS…RTLK, GHTD…RTLH, GHDH…KTFQ, HGEW…CKCD, DHDH…CLVT, GHDN…CAKT, and AHEH…WECR.

This sequence belongs to the WD repeat LIS1/nudF family.

The protein resides in the cytoplasm. The protein localises to the cytoskeleton. It localises to the microtubule organizing center. It is found in the centrosome. Functionally, positively regulates the activity of the minus-end directed microtubule motor protein dynein. May enhance dynein-mediated microtubule sliding by targeting dynein to the microtubule plus end. Required for several dynein- and microtubule-dependent processes. This chain is Lissencephaly-1 homolog, found in Nematostella vectensis (Starlet sea anemone).